The following is a 281-amino-acid chain: MEIFNTVASLKNFVAHARAEGKTIGLVPTMGALHRGHISLIHRAVAECDICVASVFVNPTQFNDKRDLECYPRTPEADAAVLAEAACHAVFMPSVEEVYPEPDTRVFDLGSVAEVMEGKHRPGHFNGVAQVVSKLFMMVEPDKAYFGEKDFQQIAVIRSMVNLLGLPVTIVACPIIREEDGLALSSRNVRLGTEERAIAPSIARILGQSRTLRPAHTPEAVTRWVTESLNALPHLQVEYFEIVDGNSLQKIDNWQDTDHAVGCITVYCGEVRLIDNIKYED.

30 to 37 (MGALHRGH) serves as a coordination point for ATP. The Proton donor role is filled by H37. Q61 lines the (R)-pantoate pocket. Q61 contacts beta-alanine. 147-150 (GEKD) contributes to the ATP binding site. Q153 provides a ligand contact to (R)-pantoate. Residues I176 and 184–187 (LSSR) each bind ATP.

This sequence belongs to the pantothenate synthetase family. In terms of assembly, homodimer.

The protein localises to the cytoplasm. The catalysed reaction is (R)-pantoate + beta-alanine + ATP = (R)-pantothenate + AMP + diphosphate + H(+). The protein operates within cofactor biosynthesis; (R)-pantothenate biosynthesis; (R)-pantothenate from (R)-pantoate and beta-alanine: step 1/1. Functionally, catalyzes the condensation of pantoate with beta-alanine in an ATP-dependent reaction via a pantoyl-adenylate intermediate. This chain is Pantothenate synthetase, found in Porphyromonas gingivalis (strain ATCC BAA-308 / W83).